We begin with the raw amino-acid sequence, 540 residues long: Acyl-CoA synthetase 7 (540 aa).

ATP contacts are provided by residues Ser-186 to Lys-194, Asp-415, Arg-430, and Lys-522. A Microbody targeting signal motif is present at residues Ala-538–Leu-540.

This sequence belongs to the ATP-dependent AMP-binding enzyme family. As to expression, expressed in intestine.

The protein resides in the peroxisome. The enzyme catalyses nonanoate + ATP + CoA = nonanoyl-CoA + AMP + diphosphate. It catalyses the reaction IC-asc-C7 + ATP + CoA = IC-asc-C7-CoA + AMP + diphosphate. The catalysed reaction is IC-asc-C9 + ATP + CoA = IC-asc-C9-CoA + AMP + diphosphate. Its function is as follows. Plays a role in ascaroside pheromones biosynthesis, which regulates development and behavior. Specifically, activates the side chain of medium-chain indol-3-carbonyl (IC)-ascarosides for shortening through beta-oxidation. Converts IC-asc-C7 and IC-asc-C9 into IC-asc-C7-CoA and IC-asc-C9-CoA, respectively. May play a role in fatty-acid metabolism by activating and converting nonanoate (C9) into nonanoyl-CoA (C9-CoA). The chain is Acyl-CoA synthetase 7 from Caenorhabditis elegans.